A 483-amino-acid polypeptide reads, in one-letter code: Aspartyl/glutamyl-tRNA(Asn/Gln) amidotransferase subunit B (483 aa).

It belongs to the GatB/GatE family. GatB subfamily. As to quaternary structure, heterotrimer of A, B and C subunits.

It carries out the reaction L-glutamyl-tRNA(Gln) + L-glutamine + ATP + H2O = L-glutaminyl-tRNA(Gln) + L-glutamate + ADP + phosphate + H(+). The enzyme catalyses L-aspartyl-tRNA(Asn) + L-glutamine + ATP + H2O = L-asparaginyl-tRNA(Asn) + L-glutamate + ADP + phosphate + 2 H(+). Functionally, allows the formation of correctly charged Asn-tRNA(Asn) or Gln-tRNA(Gln) through the transamidation of misacylated Asp-tRNA(Asn) or Glu-tRNA(Gln) in organisms which lack either or both of asparaginyl-tRNA or glutaminyl-tRNA synthetases. The reaction takes place in the presence of glutamine and ATP through an activated phospho-Asp-tRNA(Asn) or phospho-Glu-tRNA(Gln). The chain is Aspartyl/glutamyl-tRNA(Asn/Gln) amidotransferase subunit B from Herpetosiphon aurantiacus (strain ATCC 23779 / DSM 785 / 114-95).